We begin with the raw amino-acid sequence, 328 residues long: MRVPLLILLFLVLTSGCIAPSTPSFTQTPTCLEQEKDLNKAIKCYLEDPREIKALTNLSKSLKGPNEEWTIWNILKWEEENLKYDDNKPTNYILRPSEFLVKRKGVCTDYTVLTLGLLLTLNYSQVGFMIVHYAESTTLHSTAIANVSGTLFVLDQKLPPLDLGSYIVESGKAGKLITQGELYYVSKSNGSIIIEGPTILGANDFIRQDYKIDEQELKSIEIALKTMIAQRSKLSQVYELKYSLPRGFKERRAWILKIPRFRVIYNPIFKEQYLETIIYHILEDEEIKEHIKTATGFYLEVTTEQEDLIIKFYLAKQYIYKGHNKNRG.

A helical membrane pass occupies residues 3-23 (VPLLILLFLVLTSGCIAPSTP).

This sequence belongs to the UPF0252 family.

It localises to the membrane. The sequence is that of UPF0252 protein PF0978 from Pyrococcus furiosus (strain ATCC 43587 / DSM 3638 / JCM 8422 / Vc1).